The primary structure comprises 81 residues: Protein Vpu (81 aa).

The Extracellular segment spans residues 1 to 6 (MQPIQI). A helical transmembrane segment spans residues 7–27 (AIVALVVAIIIAIVVWSIVII). The Cytoplasmic portion of the chain corresponds to 28–81 (EYRKILRQRKIDRLIDRLIERAEDSGNESEGEISALVEMGVEMGHHAPWDVDDL). Phosphoserine; by host CK2 occurs at positions 52 and 56.

It belongs to the HIV-1 VPU protein family. In terms of assembly, homopentamer. Interacts with host CD4 and BRTC; these interactions induce proteasomal degradation of CD4. Interacts with host BST2; this interaction leads to the degradation of host BST2. Interacts with host FBXW11. Interacts with host AP1M1; this interaction plays a role in the mistrafficking and subsequent degradation of host BST2. Interacts with host RANBP2; this interaction allows Vpu to down-regulate host BLM sumoylation. Post-translationally, phosphorylated by host CK2. This phosphorylation is necessary for interaction with human BTRC and degradation of CD4.

It localises to the host membrane. Its activity is regulated as follows. Ion channel activity is inhibited by hexamethylene amiloride in vitro. In terms of biological role, enhances virion budding by targeting host CD4 and Tetherin/BST2 to proteasome degradation. Degradation of CD4 prevents any unwanted premature interactions between viral Env and its host receptor CD4 in the endoplasmic reticulum. Degradation of antiretroviral protein Tetherin/BST2 is important for virion budding, as BST2 tethers new viral particles to the host cell membrane. Mechanistically, Vpu bridges either CD4 or BST2 to BTRC, a substrate recognition subunit of the Skp1/Cullin/F-box protein E3 ubiquitin ligase, induces their ubiquitination and subsequent proteasomal degradation. The alteration of the E3 ligase specificity by Vpu seems to promote the degradation of host IKBKB, leading to NF-kappa-B down-regulation and subsequent apoptosis. Acts as a viroporin that forms an oligomeric ion channel in membranes. Modulates the host DNA repair mechanisms to promote degradation of nuclear viral cDNA in cells that are already productively infected in order to suppress immune sensing and proviral hyper-integration (superinfection). Manipulates PML-NBs and modulates SUMOylation of host BLM protein thereby enhancing its DNA-end processing activity toward viral unintegrated linear DNA. Also inhibits RAD52-mediated homologous repair of viral cDNA, preventing the generation of dead-end circular forms of single copies of the long terminal repeat and permitting sustained nucleolytic attack. The protein is Protein Vpu of Human immunodeficiency virus type 1 group M subtype B (isolate BH10) (HIV-1).